The following is a 514-amino-acid chain: Extracellular exo-inulinase (514 aa).

Positions 1 to 18 (MRAFLALIFLTFVMNVES) are cleaved as a signal peptide. Substrate contacts are provided by residues 33–34 (ND) and Gln52. Residue Asp34 is the Nucleophile of the active site. Asn56 is a glycosylation site (N-linked (GlcNAc...) asparagine). The substrate site is built by Trp60 and Ser95. 2 N-linked (GlcNAc...) asparagine glycosylation sites follow: Asn104 and Asn110. 162 to 163 (RD) contributes to the substrate binding site. Residues Asn197 and Asn203 are each glycosylated (N-linked (GlcNAc...) asparagine). Residues Glu214 and Trp300 each coordinate substrate. Glu214 acts as the Proton donor/acceptor in catalysis. Residues Asn357, Asn371, Asn389, and Asn422 are each glycosylated (N-linked (GlcNAc...) asparagine).

The protein belongs to the glycosyl hydrolase 32 family.

It localises to the secreted. The catalysed reaction is Hydrolysis of terminal, non-reducing (2-&gt;1)- and (2-&gt;6)-linked beta-D-fructofuranose residues in fructans.. Its function is as follows. Exo-inulinase involved in utilization of the plant storage polymer inulin, consisting of fructooligosaccharides with a degree of polymerization (DP) value from 2 to 60. Splits off terminal fructose units successively from the non-reducing end of the inulin molecule. This chain is Extracellular exo-inulinase, found in Meyerozyma guilliermondii (strain ATCC 6260 / CBS 566 / DSM 6381 / JCM 1539 / NBRC 10279 / NRRL Y-324) (Yeast).